Reading from the N-terminus, the 257-residue chain is Snake venom serine protease BITS01A (257 aa).

The N-terminal stretch at methionine 1–alanine 18 is a signal peptide. Positions glutamine 19 to leucine 24 are excised as a propeptide. The Peptidase S1 domain occupies valine 25 to alanine 248. 6 disulfide bridges follow: cysteine 31–cysteine 162, cysteine 49–cysteine 65, cysteine 97–cysteine 255, cysteine 141–cysteine 209, cysteine 173–cysteine 188, and cysteine 199–cysteine 224. The Charge relay system role is filled by histidine 64. N-linked (GlcNAc...) asparagine glycosylation occurs at asparagine 101. Catalysis depends on aspartate 109, which acts as the Charge relay system. N-linked (GlcNAc...) asparagine glycosylation is found at asparagine 121, asparagine 153, and asparagine 169. Serine 203 acts as the Charge relay system in catalysis. N-linked (GlcNAc...) asparagine glycosylation is found at asparagine 210 and asparagine 250.

Belongs to the peptidase S1 family. Snake venom subfamily. Monomer. As to expression, expressed by the venom gland.

The protein localises to the secreted. In terms of biological role, snake venom serine protease that may act in the hemostasis system of the prey. The chain is Snake venom serine protease BITS01A from Bothrops insularis (Golden lancehead).